Reading from the N-terminus, the 595-residue chain is Putative histone-lysine N-methyltransferase PRDM6 (595 aa).

The tract at residues 27-90 is disordered; it reads FPHGGAGPLK…STPASSSTSA (64 aa). Gly residues predominate over residues 30–40; sequence GGAGPLKGSGA. Over residues 49–59 the composition is skewed to pro residues; sequence PLQPPPPPPPP. Residues 71-90 are compositionally biased toward low complexity; the sequence is PRPASLSSASSTPASSSTSA. An SET domain is found at 246–365; it reads REVCLCTSTV…RGTELLVWYN (120 aa). The C2H2-type 1; degenerate zinc finger occupies 473–495; the sequence is WKCGQCFKTFTQRILLQMHVCTQ. 2 C2H2-type zinc fingers span residues 501-523 and 529-551; these read YQCGHCSQSFSQPSELRNHVVTH and FKCGYCGRAFAGATTLNNHIRTH. Residues 557–579 form a C2H2-type 4; degenerate zinc finger; it reads FKCERCERSFTQATQLSRHQRMP.

This sequence belongs to the class V-like SAM-binding methyltransferase superfamily. Interacts with HDAC1, HDAC2, HDAC3, CBX1 and EP300.

Its subcellular location is the nucleus. The enzyme catalyses L-lysyl(20)-[histone H4] + S-adenosyl-L-methionine = N(6)-methyl-L-lysyl(20)-[histone H4] + S-adenosyl-L-homocysteine + H(+). Putative histone methyltransferase that acts as a transcriptional repressor of smooth muscle gene expression. Promotes the transition from differentiated to proliferative smooth muscle by suppressing differentiation and maintaining the proliferative potential of vascular smooth muscle cells. Also plays a role in endothelial cells by inhibiting endothelial cell proliferation, survival and differentiation. It is unclear whether it has histone methyltransferase activity in vivo. According to some authors, it does not act as a histone methyltransferase by itself and represses transcription by recruiting EHMT2/G9a. According to others, it possesses histone methyltransferase activity when associated with other proteins and specifically methylates 'Lys-20' of histone H4 in vitro. 'Lys-20' methylation represents a specific tag for epigenetic transcriptional repression. This is Putative histone-lysine N-methyltransferase PRDM6 (PRDM6) from Homo sapiens (Human).